The following is a 361-amino-acid chain: Transcription factor TCP10 (361 aa).

Residues 29–87 enclose the TCP domain; it reads RKDRHSKVFTSKGPRDRRVRLSAHTAIQFYDVQDRLGYDRPSKAVDWLIKKAKTAIDKL. 2 disordered regions span residues 220-259 and 295-317; these read DLTM…QPSM and SWDH…SMFA. The segment covering 295-304 has biased composition (basic and acidic residues); sequence SWDHHQTTSD.

In terms of assembly, interacts with AHP1, AHP2 and AHP3. Interacts with SPL. In terms of tissue distribution, mostly detected in lateral organs, such as leaves and flowers. Expressed in cotyledons, particularly in the vascular region, in leaves, roots, stems, buds, flowers and immature siliques.

It localises to the nucleus. In terms of biological role, plays a pivotal role in the control of morphogenesis of shoot organs by negatively regulating the expression of boundary-specific genes such as CUC genes, probably through the induction of miRNA (e.g. miR164). Participates in ovule development. This chain is Transcription factor TCP10 (TCP10), found in Arabidopsis thaliana (Mouse-ear cress).